A 140-amino-acid chain; its full sequence is Large ribosomal subunit protein bL17 (140 aa).

The protein belongs to the bacterial ribosomal protein bL17 family. In terms of assembly, part of the 50S ribosomal subunit. Contacts protein L32.

The polypeptide is Large ribosomal subunit protein bL17 (Gluconobacter oxydans (strain 621H) (Gluconobacter suboxydans)).